Here is a 134-residue protein sequence, read N- to C-terminus: Complexin-2 (134 aa).

The tract at residues 1 to 114 is disordered; it reads MDFVMKQALG…CGDEEEEEEE (114 aa). Residues 15 to 85 show a composition bias toward basic and acidic residues; it reads DMGKMLGGEE…EEKEAEEKAA (71 aa). Residues 28–84 adopt a coiled-coil conformation; the sequence is PDAQKKEEERQEALRQQEEERKAKHARMEAEREKVRQQIRDKYGLKKKEEKEAEEKA. The interval 41–97 is interaction with the SNARE complex; it reads LRQQEEERKAKHARMEAEREKVRQQIRDKYGLKKKEEKEAEEKAALEQPCEGSLTRP. Residue serine 93 is modified to Phosphoserine.

The protein belongs to the complexin/synaphin family. In terms of assembly, binds to the SNARE core complex containing SNAP25, VAMP2 and STX1A. As to expression, nervous system. Also present in adrenal chromaffin cells (at protein level).

The protein localises to the cytoplasm. Its subcellular location is the cytosol. The protein resides in the presynapse. It is found in the nucleus. It localises to the perikaryon. In terms of biological role, negatively regulates the formation of synaptic vesicle clustering at active zone to the presynaptic membrane in postmitotic neurons. Positively regulates a late step in exocytosis of various cytoplasmic vesicles, such as synaptic vesicles and other secretory vesicles. Also involved in mast cell exocytosis. The sequence is that of Complexin-2 (CPLX2) from Bos taurus (Bovine).